The following is a 363-amino-acid chain: Hydroxycarboxylic acid receptor 2 (363 aa).

Residues 1–33 (MNRHHLQDHFLEIDKKNCCVFRDDFIVKVLPPV) are Extracellular-facing. Residues 34–54 (LGLEFIFGLLGNGLALWIFCF) traverse the membrane as a helical segment. Over 55–63 (HLKSWKSSR) the chain is Cytoplasmic. A helical transmembrane segment spans residues 64–84 (IFLFNLAVADFLLIICLPFLM). Residues 85 to 102 (DNYVRRWDWKFGDIPCRL) lie on the Extracellular side of the membrane. The cysteines at positions 100 and 177 are disulfide-linked. A helical transmembrane segment spans residues 103-123 (MLFMLAMNRQGSIIFLTVVAV). Residues 124–142 (DRYFRVVHPHHALNKISNR) lie on the Cytoplasmic side of the membrane. A helical transmembrane segment spans residues 143–163 (TAAIISCLLWGITIGLTVHLL). The Extracellular segment spans residues 164 to 192 (KKKMPIQNGGANLCSSFSICHTFQWHEAM). A helical membrane pass occupies residues 193–213 (FLLEFFLPLGIILFCSARIIW). Over 214–229 (SLRQRQMDRHAKIKRA) the chain is Cytoplasmic. A helical membrane pass occupies residues 230 to 250 (ITFIMVVAIVFVICFLPSVVV). The Extracellular portion of the chain corresponds to 251 to 273 (RIRIFWLLHTSGTQNCEVYRSVD). A helical transmembrane segment spans residues 274-294 (LAFFITLSFTYMNSMLDPVVY). Residues 295 to 363 (YFSSPSFPNF…SPSYLGPTSP (69 aa)) lie on the Cytoplasmic side of the membrane. Residues 319–363 (GEPDNNRSTSVELTGDPNKTRGAPEALMANSGEPWSPSYLGPTSP) are disordered. Phosphoserine is present on Ser-328.

The protein belongs to the G-protein coupled receptor 1 family. In terms of tissue distribution, expression largely restricted to adipose tissue and spleen. Expressed on mature neutrophils but not on immature neutrophils or eosinophils.

It is found in the cell membrane. Functionally, acts as a high affinity receptor for both nicotinic acid (also known as niacin) and (D)-beta-hydroxybutyrate and mediates increased adiponectin secretion and decreased lipolysis through G(i)-protein-mediated inhibition of adenylyl cyclase. This pharmacological effect requires nicotinic acid doses that are much higher than those provided by a normal diet. Mediates nicotinic acid-induced apoptosis in mature neutrophils. Receptor activation by nicotinic acid results in reduced cAMP levels which may affect activity of cAMP-dependent protein kinase A and phosphorylation of target proteins, leading to neutrophil apoptosis. The rank order of potency for the displacement of nicotinic acid binding is 5-methyl pyrazole-3-carboxylic acid = pyridine-3-acetic acid &gt; acifran &gt; 5-methyl nicotinic acid = acipimox &gt;&gt; nicotinuric acid = nicotinamide. This is Hydroxycarboxylic acid receptor 2 (HCAR2) from Homo sapiens (Human).